A 400-amino-acid polypeptide reads, in one-letter code: Cartilage-associated protein (400 aa).

An N-terminal signal peptide occupies residues 1–25; it reads MGPRSPTAALLVLLCVGCAPTPGRG. N86 and N362 each carry an N-linked (GlcNAc...) asparagine glycan.

It belongs to the leprecan family. Found in articular chondrocytes. Expressed in a variety of tissues.

The protein resides in the secreted. It is found in the extracellular space. Its subcellular location is the extracellular matrix. Necessary for efficient 3-hydroxylation of fibrillar collagen prolyl residues. This is Cartilage-associated protein (Crtap) from Mus musculus (Mouse).